The primary structure comprises 123 residues: Hydrogenase maturation factor HypA (123 aa).

His-2 provides a ligand contact to Ni(2+). Zn(2+) is bound by residues Cys-77, Cys-80, Cys-96, and Cys-99.

This sequence belongs to the HypA/HybF family.

In terms of biological role, involved in the maturation of [NiFe] hydrogenases. Required for nickel insertion into the metal center of the hydrogenase. This chain is Hydrogenase maturation factor HypA, found in Methanococcus aeolicus (strain ATCC BAA-1280 / DSM 17508 / OCM 812 / Nankai-3).